We begin with the raw amino-acid sequence, 578 residues long: Zinc finger-containing ubiquitin peptidase 1 (578 aa).

The C2H2-type 1 zinc-finger motif lies at 2 to 24; it reads LSCNICGETVTSEPDMKAHLIVH. The C2H2-type 2; atypical zinc-finger motif lies at 29 to 52; sequence IICPFCKLSGVNYDEMCFHIETAH. C2H2-type zinc fingers lie at residues 154 to 177 and 193 to 215; these read PECP…KTKH and YDCP…VDLH. The tract at residues 226 to 248 is MIU; it reads DRVQCSGDLQLAHQLQQEEDRKR. The tract at residues 249 to 274 is zUBD/ZHA; that stretch reads RSEESRQEIEEFQKLQRQYGLDNSGG. An N6-acetyllysine modification is found at Lys262. Catalysis depends on Cys360, which acts as the Nucleophile. The Proton acceptor role is filled by His491. The active site involves Asp512.

It belongs to the peptidase C78 family. ZUFSP subfamily. In terms of assembly, interacts with RPA1 and RPA2.

It is found in the cytoplasm. The protein localises to the nucleus. The catalysed reaction is Thiol-dependent hydrolysis of ester, thioester, amide, peptide and isopeptide bonds formed by the C-terminal Gly of ubiquitin (a 76-residue protein attached to proteins as an intracellular targeting signal).. Its function is as follows. Deubiquitinase with endodeubiquitinase activity that specifically interacts with and cleaves 'Lys-63'-linked long polyubiquitin chains. Shows only weak activity against 'Lys-11' and 'Lys-48'-linked chains. Plays an important role in genome stability pathways, functioning to prevent spontaneous DNA damage and also promote cellular survival in response to exogenous DNA damage. Modulates the ubiquitination status of replication protein A (RPA) complex proteins in response to replication stress. The protein is Zinc finger-containing ubiquitin peptidase 1 of Homo sapiens (Human).